Here is a 398-residue protein sequence, read N- to C-terminus: E3 ubiquitin-protein ligase RSL1 (398 aa).

The interval 155–374 is TRIAD supradomain; that stretch reads QKETCNICLN…LDLTQCCGSC (220 aa). Zn(2+)-binding residues include cysteine 159, cysteine 162, cysteine 183, cysteine 186, cysteine 246, cysteine 251, cysteine 271, cysteine 274, cysteine 279, cysteine 282, histidine 287, cysteine 292, cysteine 321, and cysteine 324. An RING-type 3; degenerate zinc finger spans residues 159-207; it reads CNICLNDDINADQMFSVDKSGHMCCSECVKRHIEVRLLEGSLITCPHYR. The segment at 159 to 208 adopts an RING-type 1 zinc-finger fold; that stretch reads CNICLNDDINADQMFSVDKSGHMCCSECVKRHIEVRLLEGSLITCPHYRC. The IBR-type zinc-finger motif lies at 233 to 292; the sequence is TKDELIPVMDRVYCPNPRCSTLMSETELSGLNIGVRRCCVKCGEPFCVKCKVSWHNNLSC. Residues 321-349 form an RING-type 2; atypical zinc finger; it reads CSKCKHMIELSSGCISVVCRCGHTFCYQC. The segment at 321 to 356 adopts an RING-type 4; degenerate zinc-finger fold; it reads CSKCKHMIELSSGCISVVCRCGHTFCYQCGADAGDC. The active site involves cysteine 334. The Zn(2+) site is built by cysteine 339, cysteine 341, cysteine 346, cysteine 349, histidine 358, and cysteine 370. A helical membrane pass occupies residues 374 to 394; the sequence is CCCFVFFLVIIAIVVTIILLV.

Belongs to the RBR family. In terms of assembly, interacts with the PYL4 and PYR1 ABA receptors at the plasma membrane. Zn(2+) is required as a cofactor.

It is found in the cell membrane. It localises to the vacuole membrane. It carries out the reaction [E2 ubiquitin-conjugating enzyme]-S-ubiquitinyl-L-cysteine + [acceptor protein]-L-lysine = [E2 ubiquitin-conjugating enzyme]-L-cysteine + [acceptor protein]-N(6)-ubiquitinyl-L-lysine.. It functions in the pathway protein modification; protein ubiquitination. Its function is as follows. Acts as an E3 ubiquitin-protein ligase, or as part of E3 complex, which accepts ubiquitin from specific E2 ubiquitin-conjugating enzymes and then transfers it to substrates. Negative regulator of the abscisic acid (ABA) signaling pathway which targets PYL4 and PYR1 ABA receptors in plasma membrane to promote their FREE1/FYVE1-dependent trafficking and degradation upon ubiquitynation; this process involves clathrin-mediated endocytosis and trafficking through the ESCRT pathway. Involved in the maintenance of seed longevity. May enhance gibberellins responses. This Arabidopsis thaliana (Mouse-ear cress) protein is E3 ubiquitin-protein ligase RSL1.